The chain runs to 290 residues: Isopentenyl-diphosphate Delta-isomerase II (290 aa).

Positions 108–260 (MLHRAFTVFL…GLKLSPWFRL (153 aa)) constitute a Nudix hydrolase domain. Residues Cys145 and Glu207 contribute to the active site.

This sequence belongs to the IPP isomerase type 1 family.

It carries out the reaction isopentenyl diphosphate = dimethylallyl diphosphate. The protein operates within isoprenoid biosynthesis; dimethylallyl diphosphate biosynthesis; dimethylallyl diphosphate from isopentenyl diphosphate: step 1/1. Its pathway is porphyrin-containing compound metabolism; chlorophyll biosynthesis. Functionally, catalyzes the 1,3-allylic rearrangement of the homoallylic substrate isopentenyl (IPP) to its highly electrophilic allylic isomer, dimethylallyl diphosphate (DMAPP). The polypeptide is Isopentenyl-diphosphate Delta-isomerase II (IPI2) (Clarkia xantiana (Gunsight clarkia)).